We begin with the raw amino-acid sequence, 1020 residues long: X-linked retinitis pigmentosa GTPase regulator (1020 aa).

6 RCC1 repeats span residues Asn-54–Gly-105, Gly-106–Asp-158, Gly-159–Asp-208, Gly-209–Asn-261, Ala-262–Ile-313, and Gly-314–Pro-367. 2 positions are modified to phosphoserine: Ser-418 and Ser-518. 3 disordered regions span residues His-609–Lys-776, Glu-790–Ala-906, and Asp-989–Leu-1020. 8 stretches are compositionally biased toward basic and acidic residues: residues Leu-618–Ser-636, Glu-644–Thr-665, Glu-685–Lys-698, Asp-704–Ser-715, Lys-760–Lys-771, Glu-790–Lys-802, Glu-816–Glu-853, and Ser-883–Ala-906. Over residues Asn-996–Asn-1009 the composition is skewed to polar residues. At Cys-1017 the chain carries Cysteine methyl ester. A lipid anchor (S-geranylgeranyl cysteine) is attached at Cys-1017. Residues Thr-1018 to Leu-1020 constitute a propeptide, removed in mature form.

As to quaternary structure, interacts with SPATA7. Interacts with CEP290. Interacts with WHRN. Interacts with PDE6D. Interacts with RPGRIP1. Interacts with RPGRIP1L. PDE6D, RPGRIP1 and RPGRIP1L may compete for the same binding sites. Interacts with RAB37 and RAB8A (in GDP-bound forms); functions as GEF for RAB37 and RAB8A. Isoform 6 interacts with NPM1 (via C-terminus). Isoform 6 interacts with SMC1A and SMC3. Prenylated. In terms of tissue distribution, heart, brain, placenta, lung, liver, muscle, kidney, retina, pancreas and fetal retinal pigment epithelium. Isoform 3 is found only in the retina. Colocalizes with RPGRIP1 in the outer segment of rod photoreceptors and cone outer segments.

Its subcellular location is the cytoplasm. The protein resides in the cytoskeleton. The protein localises to the flagellum axoneme. It localises to the golgi apparatus. It is found in the cell projection. Its subcellular location is the cilium. The protein resides in the microtubule organizing center. The protein localises to the centrosome. It localises to the cilium basal body. It is found in the cilium axoneme. Its function is as follows. Acts as a guanine-nucleotide releasing factor (GEF) for RAB8A and RAB37 by promoting the conversion of inactive RAB-GDP to the active form RAB-GTP. GEF activity towards RAB8A may facilitate ciliary trafficking by modulating ciliary intracellular localization of RAB8A. GEF activity towards RAB37 maintains autophagic homeostasis and retinal function. Involved in photoreceptor integrity. May control cilia formation by regulating actin stress filaments and cell contractility. May be involved in microtubule organization and regulation of transport in primary cilia. May play a critical role in spermatogenesis and in intraflagellar transport processes. This chain is X-linked retinitis pigmentosa GTPase regulator, found in Homo sapiens (Human).